A 467-amino-acid polypeptide reads, in one-letter code: Dynactin subunit 4 (467 aa).

The residue at position 2 (A2) is an N-acetylalanine. The stretch at 152–172 (QQLAQKEKVERDRKKLARRRN) forms a coiled coil. Position 203 is a phosphoserine (S203). K222 is covalently cross-linked (Glycyl lysine isopeptide (Lys-Gly) (interchain with G-Cter in SUMO2)). The residue at position 414 (T414) is a Phosphothreonine.

Belongs to the dynactin subunit 4 family. Subunit of dynactin, a multiprotein complex part of a tripartite complex with dynein and a adapter, such as BICDL1, BICD2 or HOOK3. The dynactin complex is built around ACTR1A/ACTB filament and consists of an actin-related filament composed of a shoulder domain, a pointed end and a barbed end. Its length is defined by its flexible shoulder domain. The soulder is composed of 2 DCTN1 subunits, 4 DCTN2 and 2 DCTN3. The 4 DCNT2 (via N-terminus) bind the ACTR1A filament and act as molecular rulers to determine the length. The pointed end is important for binding dynein-dynactin cargo adapters. Consists of 4 subunits: ACTR10, DCNT4, DCTN5 and DCTN6. The barbed end is composed of a CAPZA1:CAPZB heterodimers, which binds ACTR1A/ACTB filament and dynactin and stabilizes dynactin. Interacts with ATP7B, but not ATP7A, in a copper-dependent manner. Interacts with ANK2; this interaction is required for localization at costameres. Interacts with N4BP2L1.

The protein localises to the cytoplasm. The protein resides in the cytoskeleton. It localises to the microtubule organizing center. It is found in the centrosome. Its subcellular location is the stress fiber. The protein localises to the cell cortex. The protein resides in the myofibril. It localises to the sarcomere. Part of the dynactin complex that activates the molecular motor dynein for ultra-processive transport along microtubules. The sequence is that of Dynactin subunit 4 (Dctn4) from Mus musculus (Mouse).